The following is a 162-amino-acid chain: Shikimate kinase (162 aa).

Position 11-16 (11-16 (GSGKSS)) interacts with ATP. Ser-15 serves as a coordination point for Mg(2+). Residues Asp-33, Arg-57, and Gly-80 each coordinate substrate. An ATP-binding site is contributed by Arg-116. Arg-132 is a substrate binding site.

The protein belongs to the shikimate kinase family. As to quaternary structure, monomer. Mg(2+) is required as a cofactor.

It is found in the cytoplasm. The catalysed reaction is shikimate + ATP = 3-phosphoshikimate + ADP + H(+). It functions in the pathway metabolic intermediate biosynthesis; chorismate biosynthesis; chorismate from D-erythrose 4-phosphate and phosphoenolpyruvate: step 5/7. Its function is as follows. Catalyzes the specific phosphorylation of the 3-hydroxyl group of shikimic acid using ATP as a cosubstrate. The chain is Shikimate kinase from Helicobacter pylori (strain G27).